Consider the following 512-residue polypeptide: Maturase K (512 aa).

This sequence belongs to the intron maturase 2 family. MatK subfamily.

It is found in the plastid. Its subcellular location is the chloroplast. Its function is as follows. Usually encoded in the trnK tRNA gene intron. Probably assists in splicing its own and other chloroplast group II introns. This chain is Maturase K, found in Daucus carota (Wild carrot).